The primary structure comprises 103 residues: Large ribosomal subunit protein uL24 (103 aa).

It belongs to the universal ribosomal protein uL24 family. Part of the 50S ribosomal subunit.

One of two assembly initiator proteins, it binds directly to the 5'-end of the 23S rRNA, where it nucleates assembly of the 50S subunit. Its function is as follows. One of the proteins that surrounds the polypeptide exit tunnel on the outside of the subunit. This Ruthia magnifica subsp. Calyptogena magnifica protein is Large ribosomal subunit protein uL24.